Consider the following 329-residue polypeptide: L-lactate dehydrogenase (329 aa).

NAD(+)-binding positions include Val18, Glu39, Lys46, Tyr71, and Gly85 to Ala86. Gln88 and Arg94 together coordinate substrate. Residues Ser107, Ala124–Asn126, and Ser149 contribute to the NAD(+) site. Residue Asn126 to Asp129 coordinates substrate. Asp154–Arg157 is a substrate binding site. Residues Arg159 and His174 each contribute to the beta-D-fructose 1,6-bisphosphate site. The Proton acceptor role is filled by His181. A Phosphotyrosine modification is found at Tyr226. Thr235 contributes to the substrate binding site.

It belongs to the LDH/MDH superfamily. LDH family. In terms of assembly, homotetramer.

It is found in the cytoplasm. The enzyme catalyses (S)-lactate + NAD(+) = pyruvate + NADH + H(+). It participates in fermentation; pyruvate fermentation to lactate; (S)-lactate from pyruvate: step 1/1. With respect to regulation, allosterically activated by fructose 1,6-bisphosphate (FBP). In terms of biological role, catalyzes the conversion of lactate to pyruvate. The polypeptide is L-lactate dehydrogenase (Streptococcus agalactiae serotype V (strain ATCC BAA-611 / 2603 V/R)).